A 165-amino-acid polypeptide reads, in one-letter code: Small ribosomal subunit protein uS5 (165 aa).

The region spanning 10-73 (QIEKLISLNR…TSARKNLRFV (64 aa)) is the S5 DRBM domain.

The protein belongs to the universal ribosomal protein uS5 family. In terms of assembly, part of the 30S ribosomal subunit. Contacts proteins S4 and S8.

With S4 and S12 plays an important role in translational accuracy. In terms of biological role, located at the back of the 30S subunit body where it stabilizes the conformation of the head with respect to the body. The chain is Small ribosomal subunit protein uS5 from Borreliella burgdorferi (strain ATCC 35210 / DSM 4680 / CIP 102532 / B31) (Borrelia burgdorferi).